A 366-amino-acid chain; its full sequence is Holliday junction branch migration complex subunit RuvB (366 aa).

A disordered region spans residues 1–49; that stretch reads MAIISSKKQPPEPNGQPNKRPESAPSVPKEKVLQPEAAIDEQGKQEESI. The tract at residues 13–210 is large ATPase domain (RuvB-L); the sequence is PNGQPNKRPE…FGLIQKLRFY (198 aa). ATP-binding positions include isoleucine 49, arginine 50, glycine 91, lysine 94, threonine 95, threonine 96, 157-159, arginine 200, tyrosine 210, and arginine 247; that span reads EDY. Threonine 95 is a Mg(2+) binding site. The interval 211 to 281 is small ATPAse domain (RuvB-S); the sequence is EVDELSQIVL…IAAEALQLFQ (71 aa). The interval 284 to 366 is head domain (RuvB-H); the sequence is PCGLDWTDRR…TPPNEQLSLL (83 aa). DNA-binding residues include arginine 339 and arginine 344.

The protein belongs to the RuvB family. In terms of assembly, homohexamer. Forms an RuvA(8)-RuvB(12)-Holliday junction (HJ) complex. HJ DNA is sandwiched between 2 RuvA tetramers; dsDNA enters through RuvA and exits via RuvB. An RuvB hexamer assembles on each DNA strand where it exits the tetramer. Each RuvB hexamer is contacted by two RuvA subunits (via domain III) on 2 adjacent RuvB subunits; this complex drives branch migration. In the full resolvosome a probable DNA-RuvA(4)-RuvB(12)-RuvC(2) complex forms which resolves the HJ.

The protein resides in the cytoplasm. The enzyme catalyses ATP + H2O = ADP + phosphate + H(+). The RuvA-RuvB-RuvC complex processes Holliday junction (HJ) DNA during genetic recombination and DNA repair, while the RuvA-RuvB complex plays an important role in the rescue of blocked DNA replication forks via replication fork reversal (RFR). RuvA specifically binds to HJ cruciform DNA, conferring on it an open structure. The RuvB hexamer acts as an ATP-dependent pump, pulling dsDNA into and through the RuvAB complex. RuvB forms 2 homohexamers on either side of HJ DNA bound by 1 or 2 RuvA tetramers; 4 subunits per hexamer contact DNA at a time. Coordinated motions by a converter formed by DNA-disengaged RuvB subunits stimulates ATP hydrolysis and nucleotide exchange. Immobilization of the converter enables RuvB to convert the ATP-contained energy into a lever motion, pulling 2 nucleotides of DNA out of the RuvA tetramer per ATP hydrolyzed, thus driving DNA branch migration. The RuvB motors rotate together with the DNA substrate, which together with the progressing nucleotide cycle form the mechanistic basis for DNA recombination by continuous HJ branch migration. Branch migration allows RuvC to scan DNA until it finds its consensus sequence, where it cleaves and resolves cruciform DNA. This is Holliday junction branch migration complex subunit RuvB from Nostoc sp. (strain PCC 7120 / SAG 25.82 / UTEX 2576).